The sequence spans 344 residues: N-acetyl-gamma-glutamyl-phosphate reductase (344 aa).

The active site involves C150.

The protein belongs to the NAGSA dehydrogenase family. Type 1 subfamily.

It localises to the cytoplasm. The enzyme catalyses N-acetyl-L-glutamate 5-semialdehyde + phosphate + NADP(+) = N-acetyl-L-glutamyl 5-phosphate + NADPH + H(+). It functions in the pathway amino-acid biosynthesis; L-arginine biosynthesis; N(2)-acetyl-L-ornithine from L-glutamate: step 3/4. Functionally, catalyzes the NADPH-dependent reduction of N-acetyl-5-glutamyl phosphate to yield N-acetyl-L-glutamate 5-semialdehyde. This Pseudomonas savastanoi pv. phaseolicola (strain 1448A / Race 6) (Pseudomonas syringae pv. phaseolicola (strain 1448A / Race 6)) protein is N-acetyl-gamma-glutamyl-phosphate reductase.